We begin with the raw amino-acid sequence, 360 residues long: Phospho-N-acetylmuramoyl-pentapeptide-transferase (360 aa).

At 1 to 25 (MLVWLAEHLVKYYSGFNVFSYLTFR) the chain is on the periplasmic side. A helical membrane pass occupies residues 26–46 (AIVSLLTALFISLWMGPRMIA). At 47–71 (HLQKLSFGQVVRNDGPESHFSKRGT) the chain is on the cytoplasmic side. Residues 72–92 (PTMGGIMILTAIVISVLLWAY) form a helical membrane-spanning segment. Residue Pro-93 is a topological domain, periplasmic. The helical transmembrane segment at 94–114 (SNPYVWCVLVVLVGYGIIGFV) threads the bilayer. Topologically, residues 115–131 (DDYRKVVRKDTKGLIAR) are cytoplasmic. A helical membrane pass occupies residues 132-152 (WKYFWMSVIALGVAFALYLAG). At 153–167 (KDTPATQLVVPFFKD) the chain is on the periplasmic side. A helical membrane pass occupies residues 168–188 (VMPQLGLFYILLAYFVIVGTG). The Cytoplasmic portion of the chain corresponds to 189-198 (NAVNLTDGLD). A helical transmembrane segment spans residues 199–219 (GLAIMPTVFVAGGFALVAWAT). At 220–235 (GNMNFASYLHIPYLRH) the chain is on the periplasmic side. The chain crosses the membrane as a helical span at residues 236 to 256 (AGELVIVCTAIVGAGLGFLWF). Residues 257 to 262 (NTYPAQ) lie on the Cytoplasmic side of the membrane. Residues 263 to 283 (VFMGDVGSLALGGALGIIAVL) form a helical membrane-spanning segment. Residues 284–287 (LRQE) lie on the Periplasmic side of the membrane. A helical membrane pass occupies residues 288–308 (FLLVIMGGVFVVETLSVILQV). At 309-337 (GSFKLRGQRIFRMAPIHHHYELKGWPEPR) the chain is on the cytoplasmic side. A helical membrane pass occupies residues 338–358 (VIVRFWIISLMLVLIGLATLK). Over 359 to 360 (VR) the chain is Periplasmic.

This sequence belongs to the glycosyltransferase 4 family. MraY subfamily. Mg(2+) serves as cofactor.

It is found in the cell inner membrane. The catalysed reaction is UDP-N-acetyl-alpha-D-muramoyl-L-alanyl-gamma-D-glutamyl-meso-2,6-diaminopimeloyl-D-alanyl-D-alanine + di-trans,octa-cis-undecaprenyl phosphate = di-trans,octa-cis-undecaprenyl diphospho-N-acetyl-alpha-D-muramoyl-L-alanyl-D-glutamyl-meso-2,6-diaminopimeloyl-D-alanyl-D-alanine + UMP. It functions in the pathway cell wall biogenesis; peptidoglycan biosynthesis. Its function is as follows. Catalyzes the initial step of the lipid cycle reactions in the biosynthesis of the cell wall peptidoglycan: transfers peptidoglycan precursor phospho-MurNAc-pentapeptide from UDP-MurNAc-pentapeptide onto the lipid carrier undecaprenyl phosphate, yielding undecaprenyl-pyrophosphoryl-MurNAc-pentapeptide, known as lipid I. The chain is Phospho-N-acetylmuramoyl-pentapeptide-transferase from Escherichia coli O7:K1 (strain IAI39 / ExPEC).